Reading from the N-terminus, the 268-residue chain is MTDSTTLVALVLGLLEGLTEFIPVSSTGHLLLAGHFLGFESAGRSFEVVIQLGAVLAVLTVYASKLISVIRAAPRDPQAARFLAAVLLAFLPAVVVGVMAHGFIKTVLFETPILIAIMLILGGIILLFVDRMAPAPRYNDVTEVPLGVALKIGFFQCLAMVPGVSRSGATIVGALLLGTGKRAAAEFSFFLSMPTMAGAFAFDLYKNRDVLDAGALGEIAVGFVAAFLAAVLVVRWLLGYVSRHGYSLFGWWRIIVGSIALAALLKGF.

8 consecutive transmembrane segments (helical) span residues 4–24, 50–70, 84–104, 109–129, 144–164, 184–204, 214–234, and 245–265; these read STTL…FIPV, IQLG…ISVI, AAVL…HGFI, FETP…LLFV, VPLG…VPGV, AAEF…AFDL, GALG…VLVV, and GYSL…AALL.

The protein belongs to the UppP family.

It localises to the cell inner membrane. It catalyses the reaction di-trans,octa-cis-undecaprenyl diphosphate + H2O = di-trans,octa-cis-undecaprenyl phosphate + phosphate + H(+). Catalyzes the dephosphorylation of undecaprenyl diphosphate (UPP). Confers resistance to bacitracin. This Cereibacter sphaeroides (strain ATCC 17025 / ATH 2.4.3) (Rhodobacter sphaeroides) protein is Undecaprenyl-diphosphatase.